Reading from the N-terminus, the 196-residue chain is Holliday junction branch migration complex subunit RuvA (196 aa).

Residues 1–65 (MIGNLSGTVD…ENTTQLYGFI (65 aa)) are domain I. A domain II region spans residues 66-143 (NKEEQSCLRL…KLETNNNNFY (78 aa)). Residues 144 to 147 (PINE) form a flexible linker region. Residues 147–196 (EDAVSALINLGYEKTKVYDTIKKYKPNLDTKDIIRTALKELSNYEIDIMQ) form a domain III region.

The protein belongs to the RuvA family. In terms of assembly, homotetramer. Forms an RuvA(8)-RuvB(12)-Holliday junction (HJ) complex. HJ DNA is sandwiched between 2 RuvA tetramers; dsDNA enters through RuvA and exits via RuvB. An RuvB hexamer assembles on each DNA strand where it exits the tetramer. Each RuvB hexamer is contacted by two RuvA subunits (via domain III) on 2 adjacent RuvB subunits; this complex drives branch migration. In the full resolvosome a probable DNA-RuvA(4)-RuvB(12)-RuvC(2) complex forms which resolves the HJ.

Its subcellular location is the cytoplasm. Its function is as follows. The RuvA-RuvB-RuvC complex processes Holliday junction (HJ) DNA during genetic recombination and DNA repair, while the RuvA-RuvB complex plays an important role in the rescue of blocked DNA replication forks via replication fork reversal (RFR). RuvA specifically binds to HJ cruciform DNA, conferring on it an open structure. The RuvB hexamer acts as an ATP-dependent pump, pulling dsDNA into and through the RuvAB complex. HJ branch migration allows RuvC to scan DNA until it finds its consensus sequence, where it cleaves and resolves the cruciform DNA. The protein is Holliday junction branch migration complex subunit RuvA of Wolbachia sp. subsp. Brugia malayi (strain TRS).